Here is a 96-residue protein sequence, read N- to C-terminus: Co-chaperonin GroES (96 aa).

This sequence belongs to the GroES chaperonin family. In terms of assembly, heptamer of 7 subunits arranged in a ring. Interacts with the chaperonin GroEL.

Its subcellular location is the cytoplasm. Together with the chaperonin GroEL, plays an essential role in assisting protein folding. The GroEL-GroES system forms a nano-cage that allows encapsulation of the non-native substrate proteins and provides a physical environment optimized to promote and accelerate protein folding. GroES binds to the apical surface of the GroEL ring, thereby capping the opening of the GroEL channel. This is Co-chaperonin GroES from Shewanella baltica (strain OS223).